A 502-amino-acid chain; its full sequence is Acetyl-coenzyme A carboxylase carboxyl transferase subunit beta, chloroplastic (502 aa).

A compositionally biased stretch (low complexity) spans 191–202; sequence GSDSESSSIRTS. A disordered region spans residues 191–212; it reads GSDSESSSIRTSGNDSNFNVRE. The CoA carboxyltransferase N-terminal domain occupies 226–497; it reads LWVQCENCYE…NQNSSGARGS (272 aa). Residues C230, C233, C249, and C252 each coordinate Zn(2+). A C4-type zinc finger spans residues 230–252; it reads CENCYELNYRSFFRSKMNICEQC.

This sequence belongs to the AccD/PCCB family. As to quaternary structure, acetyl-CoA carboxylase is a heterohexamer composed of biotin carboxyl carrier protein, biotin carboxylase and 2 subunits each of ACCase subunit alpha and ACCase plastid-coded subunit beta (accD). Requires Zn(2+) as cofactor.

The protein localises to the plastid. Its subcellular location is the chloroplast stroma. The enzyme catalyses N(6)-carboxybiotinyl-L-lysyl-[protein] + acetyl-CoA = N(6)-biotinyl-L-lysyl-[protein] + malonyl-CoA. Its pathway is lipid metabolism; malonyl-CoA biosynthesis; malonyl-CoA from acetyl-CoA: step 1/1. Component of the acetyl coenzyme A carboxylase (ACC) complex. Biotin carboxylase (BC) catalyzes the carboxylation of biotin on its carrier protein (BCCP) and then the CO(2) group is transferred by the transcarboxylase to acetyl-CoA to form malonyl-CoA. This Chloranthus spicatus (Chulantree) protein is Acetyl-coenzyme A carboxylase carboxyl transferase subunit beta, chloroplastic.